Consider the following 191-residue polypeptide: Protein Ves (191 aa).

The protein belongs to the Ves family.

This is Protein Ves from Escherichia coli O139:H28 (strain E24377A / ETEC).